A 38-amino-acid chain; its full sequence is Large ribosomal subunit protein bL36 (38 aa).

The protein belongs to the bacterial ribosomal protein bL36 family.

This Streptococcus pneumoniae serotype 4 (strain ATCC BAA-334 / TIGR4) protein is Large ribosomal subunit protein bL36 (rpmJ).